The sequence spans 234 residues: tRNA (guanine-N(1)-)-methyltransferase (234 aa).

S-adenosyl-L-methionine is bound by residues glycine 115 and 135–140; that span reads VGDYIL.

Belongs to the RNA methyltransferase TrmD family. Homodimer.

The protein resides in the cytoplasm. It catalyses the reaction guanosine(37) in tRNA + S-adenosyl-L-methionine = N(1)-methylguanosine(37) in tRNA + S-adenosyl-L-homocysteine + H(+). Its function is as follows. Specifically methylates guanosine-37 in various tRNAs. The sequence is that of tRNA (guanine-N(1)-)-methyltransferase from Rickettsia rickettsii (strain Iowa).